A 158-amino-acid chain; its full sequence is Ribosome maturation factor RimP (158 aa).

Belongs to the RimP family.

Its subcellular location is the cytoplasm. Functionally, required for maturation of 30S ribosomal subunits. This chain is Ribosome maturation factor RimP, found in Aquifex aeolicus (strain VF5).